The following is a 228-amino-acid chain: UPF0758 protein str1465 (228 aa).

The MPN domain occupies 103-225 (QIMSSQQVAR…YYSFREERED (123 aa)). Positions 174, 176, and 187 each coordinate Zn(2+). A JAMM motif motif is present at residues 174–187 (HNHPSGEAYPSRND).

The protein belongs to the UPF0758 family.

The polypeptide is UPF0758 protein str1465 (Streptococcus thermophilus (strain CNRZ 1066)).